We begin with the raw amino-acid sequence, 258 residues long: Deoxyribose-phosphate aldolase (258 aa).

Asp-102 functions as the Proton donor/acceptor in the catalytic mechanism. Lys-165 serves as the catalytic Schiff-base intermediate with acetaldehyde. Catalysis depends on Lys-199, which acts as the Proton donor/acceptor.

This sequence belongs to the DeoC/FbaB aldolase family. DeoC type 2 subfamily.

Its subcellular location is the cytoplasm. It catalyses the reaction 2-deoxy-D-ribose 5-phosphate = D-glyceraldehyde 3-phosphate + acetaldehyde. Its pathway is carbohydrate degradation; 2-deoxy-D-ribose 1-phosphate degradation; D-glyceraldehyde 3-phosphate and acetaldehyde from 2-deoxy-alpha-D-ribose 1-phosphate: step 2/2. In terms of biological role, catalyzes a reversible aldol reaction between acetaldehyde and D-glyceraldehyde 3-phosphate to generate 2-deoxy-D-ribose 5-phosphate. The protein is Deoxyribose-phosphate aldolase of Vibrio parahaemolyticus serotype O3:K6 (strain RIMD 2210633).